Reading from the N-terminus, the 408-residue chain is Exo-alpha-sialidase ARB_03431 (408 aa).

The first 22 residues, 1–22 (MGIKQWLLSLVVVAISATATQA), serve as a signal peptide directing secretion. 4 residues coordinate substrate: Arg62, Arg81, Asp87, and Gln150. N-linked (GlcNAc...) asparagine glycosylation is present at Asn237. Substrate-binding positions include Arg267, Arg324, 324-325 (RT), 333-334 (YD), Lys339, Tyr360, Asp378, and 378-380 (DWY). Residue Asn398 is glycosylated (N-linked (GlcNAc...) asparagine).

Belongs to the glycosyl hydrolase 33 family.

It localises to the secreted. The catalysed reaction is Hydrolysis of alpha-(2-&gt;3)-, alpha-(2-&gt;6)-, alpha-(2-&gt;8)- glycosidic linkages of terminal sialic acid residues in oligosaccharides, glycoproteins, glycolipids, colominic acid and synthetic substrates.. Sialidase is able to release sialic acid from a wide variety of natural substrates. In Arthroderma benhamiae (strain ATCC MYA-4681 / CBS 112371) (Trichophyton mentagrophytes), this protein is Exo-alpha-sialidase ARB_03431.